The primary structure comprises 585 residues: Arginine--tRNA ligase (585 aa).

The 'HIGH' region motif lies at 126–136 (PNIAKEMHVGH).

This sequence belongs to the class-I aminoacyl-tRNA synthetase family. As to quaternary structure, monomer.

It localises to the cytoplasm. It catalyses the reaction tRNA(Arg) + L-arginine + ATP = L-arginyl-tRNA(Arg) + AMP + diphosphate. The polypeptide is Arginine--tRNA ligase (Crocosphaera subtropica (strain ATCC 51142 / BH68) (Cyanothece sp. (strain ATCC 51142))).